The following is a 147-amino-acid chain: Hemoglobin subunit beta (147 aa).

The residue at position 2 (Val-2) is an N-acetylvaline. The 145-residue stretch at 3-147 folds into the Globin domain; the sequence is HLTPEEKSAV…VANALAHKYH (145 aa). Thr-13 carries the post-translational modification Phosphothreonine. The residue at position 45 (Ser-45) is a Phosphoserine. The residue at position 60 (Lys-60) is an N6-acetyllysine. His-64 serves as a coordination point for heme b. N6-acetyllysine is present on Lys-83. His-93 provides a ligand contact to heme b. Position 94 is an S-nitrosocysteine (Cys-94). Lys-145 carries the post-translational modification N6-acetyllysine.

It belongs to the globin family. Heterotetramer of two alpha chains and two beta chains. In terms of tissue distribution, red blood cells.

Its function is as follows. Involved in oxygen transport from the lung to the various peripheral tissues. The sequence is that of Hemoglobin subunit beta (HBB) from Gorilla gorilla gorilla (Western lowland gorilla).